We begin with the raw amino-acid sequence, 532 residues long: 2,3-bisphosphoglycerate-independent phosphoglycerate mutase (532 aa).

Mn(2+) is bound by residues D13 and S63. The active-site Phosphoserine intermediate is the S63. Residues H124, 154–155 (RD), R187, R193, 262–265 (RPDR), and K343 each bind substrate. D421, H425, D463, H464, and H481 together coordinate Mn(2+).

This sequence belongs to the BPG-independent phosphoglycerate mutase family. In terms of assembly, monomer. Mn(2+) is required as a cofactor.

The enzyme catalyses (2R)-2-phosphoglycerate = (2R)-3-phosphoglycerate. It participates in carbohydrate degradation; glycolysis; pyruvate from D-glyceraldehyde 3-phosphate: step 3/5. Catalyzes the interconversion of 2-phosphoglycerate and 3-phosphoglycerate. The protein is 2,3-bisphosphoglycerate-independent phosphoglycerate mutase of Mesoplasma florum (strain ATCC 33453 / NBRC 100688 / NCTC 11704 / L1) (Acholeplasma florum).